The following is a 310-amino-acid chain: Translocator protein BipD (310 aa).

Coiled coils occupy residues 127–171 (DPIL…LQDY) and 250–299 (DTAR…AIST).

Belongs to the invasin protein D family.

The protein localises to the secreted. In terms of biological role, required for invasion of epithelial cells, as well as for survival within host cells, escape from endocytic vesicles and subsequent actin-tail formation. Probably regulates the secretion of effectors BipB and BipC and their final integration into the target cell membrane. In Burkholderia mallei (strain NCTC 10247), this protein is Translocator protein BipD (bipD).